Here is a 227-residue protein sequence, read N- to C-terminus: Adapter protein MecA 1 (227 aa).

This sequence belongs to the MecA family. Homodimer.

Functionally, enables the recognition and targeting of unfolded and aggregated proteins to the ClpC protease or to other proteins involved in proteolysis. Acts negatively in the development of competence by binding ComK and recruiting it to the ClpCP protease. When overexpressed, inhibits sporulation. Also involved in Spx degradation by ClpC. This is Adapter protein MecA 1 (mecA1) from Bacillus anthracis.